The primary structure comprises 268 residues: Exodeoxyribonuclease III (268 aa).

A Mg(2+)-binding site is contributed by Glu-34. The active site involves Tyr-109. 3 residues coordinate Mg(2+): Asp-151, Asn-153, and Asp-258. Asp-151 serves as the catalytic Proton donor/acceptor.

This sequence belongs to the DNA repair enzymes AP/ExoA family. Monomer. It depends on Mg(2+) as a cofactor. Mn(2+) is required as a cofactor.

The catalysed reaction is Exonucleolytic cleavage in the 3'- to 5'-direction to yield nucleoside 5'-phosphates.. Its function is as follows. Major apurinic-apyrimidinic endonuclease of E.coli. It removes the damaged DNA at cytosines and guanines by cleaving on the 3'-side of the AP site by a beta-elimination reaction. It exhibits 3'-5'-exonuclease, 3'-phosphomonoesterase, 3'-repair diesterase and ribonuclease H activities. This is Exodeoxyribonuclease III (xthA) from Salmonella typhi.